The sequence spans 103 residues: Small ribosomal subunit protein uS10 (103 aa).

This sequence belongs to the universal ribosomal protein uS10 family. Part of the 30S ribosomal subunit.

In terms of biological role, involved in the binding of tRNA to the ribosomes. In Bordetella parapertussis (strain 12822 / ATCC BAA-587 / NCTC 13253), this protein is Small ribosomal subunit protein uS10.